The chain runs to 473 residues: PEP-dependent dihydroxyacetone kinase, phosphoryl donor subunit DhaM (473 aa).

Residues 1-137 (MVNLVIVSHS…LAAKQAQLGI (137 aa)) enclose the PTS EIIA type-4 domain. H9 serves as the catalytic Tele-phosphohistidine intermediate. The HPr domain maps to 155–242 (ARSVTVTIRN…SLAAEDFGEH (88 aa)). H169 (pros-phosphohistidine intermediate) is an active-site residue. Residues 266–472 (PLPLAQPARH…IDPAAQRVSC (207 aa)) are PTS EI-like, N-terminal part. The active-site Tele-phosphohistidine intermediate is the H432.

This sequence belongs to the PEP-utilizing enzyme family. In terms of assembly, homodimer. The dihydroxyacetone kinase complex is composed of a homodimer of DhaM, a homodimer of DhaK and the subunit DhaL.

It carries out the reaction dihydroxyacetone + phosphoenolpyruvate = dihydroxyacetone phosphate + pyruvate. Its function is as follows. Component of the dihydroxyacetone kinase complex, which is responsible for the phosphoenolpyruvate (PEP)-dependent phosphorylation of dihydroxyacetone. DhaM serves as the phosphoryl donor. Is phosphorylated by phosphoenolpyruvate in an EI- and HPr-dependent reaction, and a phosphorelay system on histidine residues finally leads to phosphoryl transfer to DhaL and dihydroxyacetone. The protein is PEP-dependent dihydroxyacetone kinase, phosphoryl donor subunit DhaM of Pantoea ananatis (strain LMG 20103).